A 314-amino-acid chain; its full sequence is uncharacterized protein (314 aa).

Residues 39 to 146 (QENVDSDSTD…SDYSSDESNS (108 aa)) form a disordered region. Positions 56-76 (STKNVSRNIPKNIPKSISKNI) are enriched in polar residues. The span at 88 to 131 (IPKNVSKNIPKNVPKNVSKNIPKNIPKNVPNKSRNKYSNYSEDS) shows a compositional bias: low complexity. Residues 132–141 (NYSEDSDYSS) show a composition bias toward acidic residues.

This is an uncharacterized protein from Acanthamoeba polyphaga mimivirus (APMV).